We begin with the raw amino-acid sequence, 598 residues long: Nicotinamide riboside transporter 1 (598 aa).

Transmembrane regions (helical) follow at residues 48-68 (LAYWGAVSFTAGTWMSGSAAL), 71-91 (GLSYPETIVSFLLGNVLTIIF), 112-132 (FVFGIYGSAFGIIIRILMSIV), 174-194 (LVGFIIFHVLTALCYFMKPYH), 197-217 (YLLIWSCVATCFAMLGIVIYL), 241-261 (AWAWVYMISYWFGSISPGSTN), 273-293 (LAIWTGSVCALLIPATLVPIF), 372-392 (GALFCACISWACLPWNFYNSS), 395-415 (FLTVMSSFGVVMTPIIAVMIC), 447-467 (AIVAWVCGMAPGLPGIAWEVN), and 484-504 (SFFSFLISFFVYWGLCVFFPF). Ser-560 and Ser-572 each carry phosphoserine.

This sequence belongs to the purine-cytosine permease (2.A.39) family.

Its subcellular location is the cell membrane. In terms of biological role, high-affinity pH-dependent nicotinamide riboside transporter which also transports thiamine with low affinity. Involved in 5-fluorocytosine sensitivity. The protein is Nicotinamide riboside transporter 1 (NRT1) of Saccharomyces cerevisiae (strain ATCC 204508 / S288c) (Baker's yeast).